Reading from the N-terminus, the 135-residue chain is Large ribosomal subunit protein uL22c (135 aa).

This sequence belongs to the universal ribosomal protein uL22 family. Part of the 50S ribosomal subunit.

The protein localises to the plastid. Its function is as follows. This protein binds specifically to 23S rRNA. The globular domain of the protein is located near the polypeptide exit tunnel on the outside of the subunit, while an extended beta-hairpin is found that lines the wall of the exit tunnel in the center of the 70S ribosome. This chain is Large ribosomal subunit protein uL22c (rpl22), found in Cuscuta exaltata (Tall dodder).